Reading from the N-terminus, the 237-residue chain is Flagellar L-ring protein (237 aa).

The N-terminal stretch at 1 to 24 (MNRLSVPRFSVLIASLCGITLLSG) is a signal peptide. Cys-25 carries the N-palmitoyl cysteine lipid modification. The S-diacylglycerol cysteine moiety is linked to residue Cys-25.

Belongs to the FlgH family. As to quaternary structure, the basal body constitutes a major portion of the flagellar organelle and consists of four rings (L,P,S, and M) mounted on a central rod.

It is found in the cell outer membrane. The protein resides in the bacterial flagellum basal body. Functionally, assembles around the rod to form the L-ring and probably protects the motor/basal body from shearing forces during rotation. This chain is Flagellar L-ring protein, found in Pseudomonas syringae pv. syringae (strain B728a).